The following is a 758-amino-acid chain: Catalase-peroxidase (758 aa).

Residues 1–10 show a composition bias toward polar residues; sequence MSDTQDNAPA. Residues 1 to 59 are disordered; it reads MSDTQDNAPASAQGVDQKAAAGCPVAHDSVTAHGSESESPAIDSPTPHSGGRPRTNRDW. Positions 128-250 form a cross-link, tryptophyl-tyrosyl-methioninium (Trp-Tyr) (with M-276); that stretch reads WHAAGTYRID…VGATEMGLIY (123 aa). H129 functions as the Proton acceptor in the catalytic mechanism. A cross-link (tryptophyl-tyrosyl-methioninium (Tyr-Met) (with W-128)) is located at residues 250–276; that stretch reads YVNPEGPRGNADPAAAAHFIRETFRRM. H291 provides a ligand contact to heme b.

This sequence belongs to the peroxidase family. Peroxidase/catalase subfamily. Homodimer or homotetramer. It depends on heme b as a cofactor. Formation of the three residue Trp-Tyr-Met cross-link is important for the catalase, but not the peroxidase activity of the enzyme.

It carries out the reaction H2O2 + AH2 = A + 2 H2O. It catalyses the reaction 2 H2O2 = O2 + 2 H2O. Functionally, bifunctional enzyme with both catalase and broad-spectrum peroxidase activity. The protein is Catalase-peroxidase of Salinispora arenicola (strain CNS-205).